Consider the following 158-residue polypeptide: SsrA-binding protein (158 aa).

The protein belongs to the SmpB family.

It is found in the cytoplasm. Functionally, required for rescue of stalled ribosomes mediated by trans-translation. Binds to transfer-messenger RNA (tmRNA), required for stable association of tmRNA with ribosomes. tmRNA and SmpB together mimic tRNA shape, replacing the anticodon stem-loop with SmpB. tmRNA is encoded by the ssrA gene; the 2 termini fold to resemble tRNA(Ala) and it encodes a 'tag peptide', a short internal open reading frame. During trans-translation Ala-aminoacylated tmRNA acts like a tRNA, entering the A-site of stalled ribosomes, displacing the stalled mRNA. The ribosome then switches to translate the ORF on the tmRNA; the nascent peptide is terminated with the 'tag peptide' encoded by the tmRNA and targeted for degradation. The ribosome is freed to recommence translation, which seems to be the essential function of trans-translation. The protein is SsrA-binding protein of Buchnera aphidicola subsp. Baizongia pistaciae (strain Bp).